A 249-amino-acid polypeptide reads, in one-letter code: tRNA pseudouridine synthase A (249 aa).

The active-site Nucleophile is the Asp-53. Residue Tyr-111 participates in substrate binding.

Belongs to the tRNA pseudouridine synthase TruA family. As to quaternary structure, homodimer.

It carries out the reaction uridine(38/39/40) in tRNA = pseudouridine(38/39/40) in tRNA. Formation of pseudouridine at positions 38, 39 and 40 in the anticodon stem and loop of transfer RNAs. The sequence is that of tRNA pseudouridine synthase A from Streptococcus suis (strain 05ZYH33).